We begin with the raw amino-acid sequence, 1435 residues long: MGARASVLSGGELDKWEKIRLRPGGKKQYKLKHIVWASRELERFAVNPGLLETSEGCRQILGQLQPSLQTGSEELRSLYNTIAVLYCVHQRIDVKDTKEALDKIEEEQNKSKKKAQQAAADTGNNSQVSQNYPIVQNLQGQMVHQAISPRTLNAWVKVVEEKAFSPEVIPMFSALSEGATPQDLNTMLNTVGGHQAAMQMLKETINEEAAEWDRLHPVHAGPIAPGQMREPRGSDIAGTTSTLQEQIGWMTHNPPIPVGEIYKRWIILGLNKIVRMYSPTSILDIRQGPKEPFRDYVDRFYKTLRAEQASQEVKNWMTETLLVQNANPDCKTILKALGPGATLEEMMTACQGVGGPGHKARVLAEAMSQVTNPATIMIQKGNFRNQRKTVKCFNCGKEGHIAKNCRAPRKKGCWKCGKEGHQMKDCTERQANFLREDLAFPQGKAREFSSEQTRANSPTRRELQVWGRDNNSLSEAGADRQGTVSFSFPQITLWQRPLVTIKIGGQLKEALLDTGADDTVLEEMNLPGRWKPKMIGGIGGFIKVRQYDQILIEICGHKAIGTVLVGPTPVNIIGRNLLTQIGCTLNFPISPIETVPVKLKPGMDGPKVKQWPLTEEKIKALVEICTEMEKEGKISKIGPENPYNTPVFAIKKKDSTKWRKLVDFRELNKRTQDFWEVQLGIPHPAGLKQKKSVTVLDVGDAYFSVPLDKDFRKYTAFTIPSINNETPGIRYQYNVLPQGWKGSPAIFQCSMTKILEPFRKQNPDIVIYQYMDDLYVGSDLEIGQHRTKIEELRQHLLRWGFTTPDKKHQKEPPFLWMGYELHPDKWTVQPIVLPEKDSWTVNDIQKLVGKLNWASQIYAGIKVRQLCKLLRGTKALTEVVPLTEEAELELAENREILKEPVHGVYYDPSKDLIAEIQKQGQGQWTYQIYQEPFKNLKTGKYARMKGAHTNDVKQLTEAVQKIATESIVIWGKTPKFKLPIQKETWEAWWTEYWQATWIPEWEFVNTPPLVKLWYQLEKEPIIGAETFYVDGAANRETKLGKAGYVTDRGRQKVVPLTDTTNQKTELQAIHLALQDSGLEVNIVTDSQYALGIIQAQPDKSESELVSQIIEQLIKKEKVYLAWVPAHKGIGGNEQVDGLVSAGIRKVLFLDGIDKAQEEHEKYHSNWRAMASDFNLPPVVAKEIVASCDKCQLKGEAMHGQVDCSPGIWQLDCTHLEGKVILVAVHVASGYIEAEVIPAETGQETAYFLLKLAGRWPVKTVHTDNGSNFTSTTVKAACWWAGIKQEFGIPYNPQSQGVIESMNKELKKIIGQVRDQAEHLKTAVQMAVFIHNFKRKGGIGGYSAGERIVDIIATDIQTKELQKQITKIQNFRVYYRDSRDPVWKGPAKLLWKGEGAVVIQDNSDIKVVPRRKAKIIRDYGKQMAGDDCVASRQDED.

G2 carries N-myristoyl glycine; by host lipidation. Residues 7–31 (VLSGGELDKWEKIRLRPGGKKQYKL) are interaction with Gp41. Positions 8–43 (LSGGELDKWEKIRLRPGGKKQYKLKHIVWASRELER) are interaction with host CALM1. Positions 12-19 (ELDKWEKI) are interaction with host AP3D1. Residues 14 to 33 (DKWEKIRLRPGGKKQYKLKH) are interaction with membrane phosphatidylinositol 4,5-bisphosphate and RNA. The short motif at 16–22 (WEKIRLR) is the Nuclear export signal element. Positions 26-32 (KKQYKLK) match the Nuclear localization signal motif. Positions 73–77 (EELRS) are interaction with membrane phosphatidylinositol 4,5-bisphosphate. The disordered stretch occupies residues 106–128 (EEQNKSKKKAQQAAADTGNNSQV). Y132 carries the post-translational modification Phosphotyrosine; by host. At S148 the chain carries Phosphoserine; by host MAPK1. Positions 189-227 (NTVGGHQAAMQMLKETINEEAAEWDRLHPVHAGPIAPGQ) are interaction with human PPIA/CYPA and NUP153. The tract at residues 277-363 (YSPTSILDIR…GGPGHKARVL (87 aa)) is dimerization/Multimerization of capsid protein p24. 2 CCHC-type zinc fingers span residues 390-407 (VKCFNCGKEGHIAKNCRA) and 411-428 (KGCWKCGKEGHQMKDCTE). Positions 444–464 (KAREFSSEQTRANSPTRRELQ) are disordered. Positions 489-493 (PQITL) are dimerization of protease. The Peptidase A2 domain maps to 508 to 577 (KEALLDTGAD…TPVNIIGRNL (70 aa)). The active-site For protease activity; shared with dimeric partner is the D513. Dimerization of protease stretches follow at residues 537–543 (GIGGFIK) and 576–588 (NLLTQIGCTLNFP). A Reverse transcriptase domain is found at 631–821 (EGKISKIGPE…PPFLWMGYEL (191 aa)). The Mg(2+) site is built by D697, D772, and D773. An RT 'primer grip' region spans residues 814–822 (FLWMGYELH). The Tryptophan repeat motif motif lies at 985–1001 (WEAWWTEYWQATWIPEW). In terms of domain architecture, RNase H type-1 spans 1021 to 1144 (IIGAETFYVD…VDGLVSAGIR (124 aa)). Residues D1030, E1065, D1085, and D1136 each coordinate Mg(2+). An Integrase-type zinc finger spans residues 1150–1191 (DGIDKAQEEHEKYHSNWRAMASDFNLPPVVAKEIVASCDKCQ). Zn(2+)-binding residues include H1159, H1163, C1187, and C1190. The Integrase catalytic domain occupies 1201–1351 (VDCSPGIWQL…SAGERIVDII (151 aa)). The Mg(2+) site is built by D1211, D1263, and E1299. The integrase-type DNA-binding region spans 1370-1417 (FRVYYRDSRDPVWKGPAKLLWKGEGAVVIQDNSDIKVVPRRKAKIIRD).

Homotrimer; further assembles as hexamers of trimers. Matrix protein p17: Interacts with gp41 (via C-terminus). Interacts with host CALM1; this interaction induces a conformational change in the Matrix protein, triggering exposure of the myristate group. Interacts with host AP3D1; this interaction allows the polyprotein trafficking to multivesicular bodies during virus assembly. Part of the pre-integration complex (PIC) which is composed of viral genome, matrix protein, Vpr and integrase. As to quaternary structure, homodimer; the homodimer further multimerizes as homohexamers or homopentamers. Interacts with human PPIA/CYPA; This interaction stabilizes the capsid. Interacts with human NUP153. Interacts with host PDZD8; this interaction stabilizes the capsid. Interacts with monkey TRIM5; this interaction destabilizes the capsid. In terms of assembly, homodimer, whose active site consists of two apposed aspartic acid residues. Heterodimer of p66 RT and p51 RT (RT p66/p51). Heterodimerization of RT is essential for DNA polymerase activity. The overall folding of the subdomains is similar in p66 RT and p51 RT but the spatial arrangements of the subdomains are dramatically different. As to quaternary structure, homotetramer; may further associate as a homohexadecamer. Part of the pre-integration complex (PIC) which is composed of viral genome, matrix protein, Vpr and integrase. Interacts with human SMARCB1/INI1 and human PSIP1/LEDGF isoform 1. Interacts with human KPNA3; this interaction might play a role in nuclear import of the pre-integration complex. Interacts with human NUP153; this interaction might play a role in nuclear import of the pre-integration complex. Mg(2+) is required as a cofactor. Specific enzymatic cleavages by the viral protease yield mature proteins. The protease is released by autocatalytic cleavage. The polyprotein is cleaved during and after budding, this process is termed maturation. Proteolytic cleavage of p66 RT removes the RNase H domain to yield the p51 RT subunit. Nucleocapsid protein p7 might be further cleaved after virus entry. In terms of processing, tyrosine phosphorylated presumably in the virion by a host kinase. Phosphorylation is apparently not a major regulator of membrane association. Post-translationally, phosphorylated possibly by host MAPK1; this phosphorylation is necessary for Pin1-mediated virion uncoating. Methylated by host PRMT6, impairing its function by reducing RNA annealing and the initiation of reverse transcription.

Its subcellular location is the host cell membrane. It localises to the host endosome. It is found in the host multivesicular body. The protein resides in the virion membrane. The protein localises to the host nucleus. Its subcellular location is the host cytoplasm. It localises to the virion. It carries out the reaction Specific for a P1 residue that is hydrophobic, and P1' variable, but often Pro.. It catalyses the reaction Endohydrolysis of RNA in RNA/DNA hybrids. Three different cleavage modes: 1. sequence-specific internal cleavage of RNA. Human immunodeficiency virus type 1 and Moloney murine leukemia virus enzymes prefer to cleave the RNA strand one nucleotide away from the RNA-DNA junction. 2. RNA 5'-end directed cleavage 13-19 nucleotides from the RNA end. 3. DNA 3'-end directed cleavage 15-20 nucleotides away from the primer terminus.. The catalysed reaction is 3'-end directed exonucleolytic cleavage of viral RNA-DNA hybrid.. The enzyme catalyses DNA(n) + a 2'-deoxyribonucleoside 5'-triphosphate = DNA(n+1) + diphosphate. With respect to regulation, protease: The viral protease is inhibited by many synthetic protease inhibitors (PIs), such as amprenavir, atazanavir, indinavir, loprinavir, nelfinavir, ritonavir and saquinavir. Use of protease inhibitors in tritherapy regimens permit more ambitious therapeutic strategies. Reverse transcriptase/ribonuclease H: RT can be inhibited either by nucleoside RT inhibitors (NRTIs) or by non nucleoside RT inhibitors (NNRTIs). NRTIs act as chain terminators, whereas NNRTIs inhibit DNA polymerization by binding a small hydrophobic pocket near the RT active site and inducing an allosteric change in this region. Classical NRTIs are abacavir, adefovir (PMEA), didanosine (ddI), lamivudine (3TC), stavudine (d4T), tenofovir (PMPA), zalcitabine (ddC), and zidovudine (AZT). Classical NNRTIs are atevirdine (BHAP U-87201E), delavirdine, efavirenz (DMP-266), emivirine (I-EBU), and nevirapine (BI-RG-587). The tritherapies used as a basic effective treatment of AIDS associate two NRTIs and one NNRTI. Its function is as follows. Mediates, with Gag polyprotein, the essential events in virion assembly, including binding the plasma membrane, making the protein-protein interactions necessary to create spherical particles, recruiting the viral Env proteins, and packaging the genomic RNA via direct interactions with the RNA packaging sequence (Psi). Gag-Pol polyprotein may regulate its own translation, by the binding genomic RNA in the 5'-UTR. At low concentration, the polyprotein would promote translation, whereas at high concentration, the polyprotein would encapsidate genomic RNA and then shut off translation. Functionally, targets the polyprotein to the plasma membrane via a multipartite membrane-binding signal, that includes its myristoylated N-terminus. Matrix protein is part of the pre-integration complex. Implicated in the release from host cell mediated by Vpu. Binds to RNA. Forms the conical core that encapsulates the genomic RNA-nucleocapsid complex in the virion. Most core are conical, with only 7% tubular. The core is constituted by capsid protein hexamer subunits. The core is disassembled soon after virion entry. Host restriction factors such as TRIM5-alpha or TRIMCyp bind retroviral capsids and cause premature capsid disassembly, leading to blocks in reverse transcription. Capsid restriction by TRIM5 is one of the factors which restricts HIV-1 to the human species. Host PIN1 apparently facilitates the virion uncoating. On the other hand, interactions with PDZD8 or CYPA stabilize the capsid. In terms of biological role, encapsulates and protects viral dimeric unspliced genomic RNA (gRNA). Binds these RNAs through its zinc fingers. Acts as a nucleic acid chaperone which is involved in rearangement of nucleic acid secondary structure during gRNA retrotranscription. Also facilitates template switch leading to recombination. As part of the polyprotein, participates in gRNA dimerization, packaging, tRNA incorporation and virion assembly. Its function is as follows. Aspartyl protease that mediates proteolytic cleavages of Gag and Gag-Pol polyproteins during or shortly after the release of the virion from the plasma membrane. Cleavages take place as an ordered, step-wise cascade to yield mature proteins. This process is called maturation. Displays maximal activity during the budding process just prior to particle release from the cell. Also cleaves Nef and Vif, probably concomitantly with viral structural proteins on maturation of virus particles. Hydrolyzes host EIF4GI and PABP1 in order to shut off the capped cellular mRNA translation. The resulting inhibition of cellular protein synthesis serves to ensure maximal viral gene expression and to evade host immune response. Also mediates cleavage of host YTHDF3. Mediates cleavage of host CARD8, thereby activating the CARD8 inflammasome, leading to the clearance of latent HIV-1 in patient CD4(+) T-cells after viral reactivation; in contrast, HIV-1 can evade CARD8-sensing when its protease remains inactive in infected cells prior to viral budding. Functionally, multifunctional enzyme that converts the viral RNA genome into dsDNA in the cytoplasm, shortly after virus entry into the cell. This enzyme displays a DNA polymerase activity that can copy either DNA or RNA templates, and a ribonuclease H (RNase H) activity that cleaves the RNA strand of RNA-DNA heteroduplexes in a partially processive 3' to 5' endonucleasic mode. Conversion of viral genomic RNA into dsDNA requires many steps. A tRNA(3)-Lys binds to the primer-binding site (PBS) situated at the 5'-end of the viral RNA. RT uses the 3' end of the tRNA primer to perform a short round of RNA-dependent minus-strand DNA synthesis. The reading proceeds through the U5 region and ends after the repeated (R) region which is present at both ends of viral RNA. The portion of the RNA-DNA heteroduplex is digested by the RNase H, resulting in a ssDNA product attached to the tRNA primer. This ssDNA/tRNA hybridizes with the identical R region situated at the 3' end of viral RNA. This template exchange, known as minus-strand DNA strong stop transfer, can be either intra- or intermolecular. RT uses the 3' end of this newly synthesized short ssDNA to perform the RNA-dependent minus-strand DNA synthesis of the whole template. RNase H digests the RNA template except for two polypurine tracts (PPTs) situated at the 5'-end and near the center of the genome. It is not clear if both polymerase and RNase H activities are simultaneous. RNase H probably can proceed both in a polymerase-dependent (RNA cut into small fragments by the same RT performing DNA synthesis) and a polymerase-independent mode (cleavage of remaining RNA fragments by free RTs). Secondly, RT performs DNA-directed plus-strand DNA synthesis using the PPTs that have not been removed by RNase H as primers. PPTs and tRNA primers are then removed by RNase H. The 3' and 5' ssDNA PBS regions hybridize to form a circular dsDNA intermediate. Strand displacement synthesis by RT to the PBS and PPT ends produces a blunt ended, linear dsDNA copy of the viral genome that includes long terminal repeats (LTRs) at both ends. Catalyzes viral DNA integration into the host chromosome, by performing a series of DNA cutting and joining reactions. This enzyme activity takes place after virion entry into a cell and reverse transcription of the RNA genome in dsDNA. The first step in the integration process is 3' processing. This step requires a complex comprising the viral genome, matrix protein, Vpr and integrase. This complex is called the pre-integration complex (PIC). The integrase protein removes 2 nucleotides from each 3' end of the viral DNA, leaving recessed CA OH's at the 3' ends. In the second step, the PIC enters cell nucleus. This process is mediated through integrase and Vpr proteins, and allows the virus to infect a non dividing cell. This ability to enter the nucleus is specific of lentiviruses, other retroviruses cannot and rely on cell division to access cell chromosomes. In the third step, termed strand transfer, the integrase protein joins the previously processed 3' ends to the 5' ends of strands of target cellular DNA at the site of integration. The 5'-ends are produced by integrase-catalyzed staggered cuts, 5 bp apart. A Y-shaped, gapped, recombination intermediate results, with the 5'-ends of the viral DNA strands and the 3' ends of target DNA strands remaining unjoined, flanking a gap of 5 bp. The last step is viral DNA integration into host chromosome. This involves host DNA repair synthesis in which the 5 bp gaps between the unjoined strands are filled in and then ligated. Since this process occurs at both cuts flanking the HIV genome, a 5 bp duplication of host DNA is produced at the ends of HIV-1 integration. Alternatively, Integrase may catalyze the excision of viral DNA just after strand transfer, this is termed disintegration. The protein is Gag-Pol polyprotein (gag-pol) of Human immunodeficiency virus type 1 group M subtype B (isolate NY5) (HIV-1).